A 434-amino-acid chain; its full sequence is Alpha-enolase (434 aa).

Position 40 (Ser-40) interacts with Mg(2+). Residues His-158 and Glu-167 each coordinate substrate. Glu-210 functions as the Proton donor in the catalytic mechanism. Asp-245, Glu-293, and Asp-318 together coordinate Mg(2+). Substrate is bound by residues Glu-293 and Asp-318. Lys-343 functions as the Proton acceptor in the catalytic mechanism. Substrate contacts are provided by residues 370–373 and Lys-394; that span reads SHRS.

It belongs to the enolase family. Homodimer. Requires Mg(2+) as cofactor.

It is found in the cytoplasm. The enzyme catalyses (2R)-2-phosphoglycerate = phosphoenolpyruvate + H2O. It functions in the pathway carbohydrate degradation; glycolysis; pyruvate from D-glyceraldehyde 3-phosphate: step 4/5. In Python regius (Ball python), this protein is Alpha-enolase.